The chain runs to 262 residues: tRNA pseudouridine synthase A (262 aa).

Asp-55 functions as the Nucleophile in the catalytic mechanism. Tyr-116 provides a ligand contact to substrate.

It belongs to the tRNA pseudouridine synthase TruA family. In terms of assembly, homodimer.

The catalysed reaction is uridine(38/39/40) in tRNA = pseudouridine(38/39/40) in tRNA. Its function is as follows. Formation of pseudouridine at positions 38, 39 and 40 in the anticodon stem and loop of transfer RNAs. The chain is tRNA pseudouridine synthase A from Bdellovibrio bacteriovorus (strain ATCC 15356 / DSM 50701 / NCIMB 9529 / HD100).